A 331-amino-acid polypeptide reads, in one-letter code: 4-hydroxy-3-methylbut-2-enyl diphosphate reductase (331 aa).

Residue Cys-12 coordinates [4Fe-4S] cluster. Residues His-43 and His-81 each coordinate (2E)-4-hydroxy-3-methylbut-2-enyl diphosphate. Residues His-43 and His-81 each contribute to the dimethylallyl diphosphate site. Residues His-43 and His-81 each contribute to the isopentenyl diphosphate site. Cys-103 serves as a coordination point for [4Fe-4S] cluster. His-131 provides a ligand contact to (2E)-4-hydroxy-3-methylbut-2-enyl diphosphate. His-131 is a dimethylallyl diphosphate binding site. Position 131 (His-131) interacts with isopentenyl diphosphate. Glu-133 (proton donor) is an active-site residue. Residue Thr-170 coordinates (2E)-4-hydroxy-3-methylbut-2-enyl diphosphate. Cys-198 is a binding site for [4Fe-4S] cluster. (2E)-4-hydroxy-3-methylbut-2-enyl diphosphate contacts are provided by Ser-226, Asn-228, and Ser-271. Dimethylallyl diphosphate-binding residues include Ser-226, Asn-228, and Ser-271. Isopentenyl diphosphate-binding residues include Ser-226, Asn-228, and Ser-271.

The protein belongs to the IspH family. The cofactor is [4Fe-4S] cluster.

The enzyme catalyses isopentenyl diphosphate + 2 oxidized [2Fe-2S]-[ferredoxin] + H2O = (2E)-4-hydroxy-3-methylbut-2-enyl diphosphate + 2 reduced [2Fe-2S]-[ferredoxin] + 2 H(+). It catalyses the reaction dimethylallyl diphosphate + 2 oxidized [2Fe-2S]-[ferredoxin] + H2O = (2E)-4-hydroxy-3-methylbut-2-enyl diphosphate + 2 reduced [2Fe-2S]-[ferredoxin] + 2 H(+). It functions in the pathway isoprenoid biosynthesis; dimethylallyl diphosphate biosynthesis; dimethylallyl diphosphate from (2E)-4-hydroxy-3-methylbutenyl diphosphate: step 1/1. The protein operates within isoprenoid biosynthesis; isopentenyl diphosphate biosynthesis via DXP pathway; isopentenyl diphosphate from 1-deoxy-D-xylulose 5-phosphate: step 6/6. In terms of biological role, catalyzes the conversion of 1-hydroxy-2-methyl-2-(E)-butenyl 4-diphosphate (HMBPP) into a mixture of isopentenyl diphosphate (IPP) and dimethylallyl diphosphate (DMAPP). Acts in the terminal step of the DOXP/MEP pathway for isoprenoid precursor biosynthesis. This is 4-hydroxy-3-methylbut-2-enyl diphosphate reductase from Listeria monocytogenes serotype 4b (strain CLIP80459).